The sequence spans 511 residues: Histidine ammonia-lyase (511 aa).

Positions 142 to 144 (ASG) form a cross-link, 5-imidazolinone (Ala-Gly). At Ser-143 the chain carries 2,3-didehydroalanine (Ser).

This sequence belongs to the PAL/histidase family. Post-translationally, contains an active site 4-methylidene-imidazol-5-one (MIO), which is formed autocatalytically by cyclization and dehydration of residues Ala-Ser-Gly.

The protein localises to the cytoplasm. The catalysed reaction is L-histidine = trans-urocanate + NH4(+). It functions in the pathway amino-acid degradation; L-histidine degradation into L-glutamate; N-formimidoyl-L-glutamate from L-histidine: step 1/3. This chain is Histidine ammonia-lyase, found in Chelativorans sp. (strain BNC1).